A 346-amino-acid chain; its full sequence is Tubulin-specific chaperone C (346 aa).

Methionine 1 carries the N-acetylmethionine modification. Residues 1–26 (MESVSCSAAAVRTGDMESQRDLSLVP) are disordered. A phosphoserine mark is found at serine 80 and serine 168. Residues 140-171 (KTRGKDAASSTKVDAAPGIPPAVESIQDSPLP) form a disordered region. Positions 171–323 (PKKAEGDLGP…NWNDVDDFNW (153 aa)) constitute a C-CAP/cofactor C-like domain.

Belongs to the TBCC family. Supercomplex made of cofactors A to E. Cofactors A and D function by capturing and stabilizing tubulin in a quasi-native conformation. Cofactor E binds to the cofactor D-tubulin complex; interaction with cofactor C then causes the release of tubulin polypeptides that are committed to the native state. Expressed in the retina. Expressed in the rod and cone photoreceptors, extending from the inner segments (IS), through the outer nuclear layer (ONL) and into the synapses in the outer plexiform layer (OPL). Strongly expressed to the photoreceptor connecting cilium at the tips of the IS (at protein level).

It is found in the cytoplasm. Tubulin-folding protein; involved in the final step of the tubulin folding pathway. The polypeptide is Tubulin-specific chaperone C (TBCC) (Homo sapiens (Human)).